The sequence spans 101 residues: NAD(P)H-quinone oxidoreductase subunit 4L, chloroplastic (101 aa).

3 helical membrane-spanning segments follow: residues 2 to 22, 30 to 52, and 61 to 81; these read ILEH…YGLI, ALMC…SDFF, and IFSI…LAIV.

It belongs to the complex I subunit 4L family. As to quaternary structure, NDH is composed of at least 16 different subunits, 5 of which are encoded in the nucleus.

The protein resides in the plastid. It localises to the chloroplast thylakoid membrane. The enzyme catalyses a plastoquinone + NADH + (n+1) H(+)(in) = a plastoquinol + NAD(+) + n H(+)(out). The catalysed reaction is a plastoquinone + NADPH + (n+1) H(+)(in) = a plastoquinol + NADP(+) + n H(+)(out). NDH shuttles electrons from NAD(P)H:plastoquinone, via FMN and iron-sulfur (Fe-S) centers, to quinones in the photosynthetic chain and possibly in a chloroplast respiratory chain. The immediate electron acceptor for the enzyme in this species is believed to be plastoquinone. Couples the redox reaction to proton translocation, and thus conserves the redox energy in a proton gradient. The protein is NAD(P)H-quinone oxidoreductase subunit 4L, chloroplastic of Oenothera glazioviana (Large-flowered evening primrose).